The following is a 297-amino-acid chain: ATP phosphoribosyltransferase (297 aa).

An N-acetylmethionine modification is found at methionine 1.

Belongs to the ATP phosphoribosyltransferase family.

It localises to the cytoplasm. The enzyme catalyses 1-(5-phospho-beta-D-ribosyl)-ATP + diphosphate = 5-phospho-alpha-D-ribose 1-diphosphate + ATP. It functions in the pathway amino-acid biosynthesis; L-histidine biosynthesis; L-histidine from 5-phospho-alpha-D-ribose 1-diphosphate: step 1/9. Its function is as follows. Catalyzes the condensation of ATP and 5-phosphoribose 1-diphosphate to form N'-(5'-phosphoribosyl)-ATP (PR-ATP). Has a crucial role in the pathway because the rate of histidine biosynthesis seems to be controlled primarily by regulation of the enzymatic activity. The polypeptide is ATP phosphoribosyltransferase (HIS1) (Saccharomyces cerevisiae (strain ATCC 204508 / S288c) (Baker's yeast)).